The primary structure comprises 466 residues: Soluble pyridine nucleotide transhydrogenase (466 aa).

36-45 (ERYHNVGGGC) provides a ligand contact to FAD.

This sequence belongs to the class-I pyridine nucleotide-disulfide oxidoreductase family. Requires FAD as cofactor.

The protein localises to the cytoplasm. The catalysed reaction is NAD(+) + NADPH = NADH + NADP(+). In terms of biological role, conversion of NADPH, generated by peripheral catabolic pathways, to NADH, which can enter the respiratory chain for energy generation. This Citrobacter koseri (strain ATCC BAA-895 / CDC 4225-83 / SGSC4696) protein is Soluble pyridine nucleotide transhydrogenase.